The sequence spans 139 residues: Membrane protein YqfB (139 aa).

Residues 3–23 (DLLTNPLIIAAIIGIISAIFG) form a helical membrane-spanning segment. Residues 25–87 (KSKEEKQNSQ…TARNLKGLER (63 aa)) form a disordered region. A coiled-coil region spans residues 62-97 (NRMEQARREAEERRRETARNLKGLERDLAAAKQKTV). Over residues 65 to 87 (EQARREAEERRRETARNLKGLER) the composition is skewed to basic and acidic residues.

Its subcellular location is the cell membrane. In Bacillus subtilis (strain 168), this protein is Membrane protein YqfB (yqfB).